A 353-amino-acid chain; its full sequence is Immune-associated nucleotide-binding protein 8 (353 aa).

Over residues 1 to 10 (MANDQKNSES) the composition is skewed to polar residues. Residues 1–43 (MANDQKNSESFPAKEDHKKDDAAAPAEVDHKDEFSASQPHPVE) form a disordered region. Positions 12 to 34 (PAKEDHKKDDAAAPAEVDHKDEF) are enriched in basic and acidic residues. An AIG1-type G domain is found at 40–248 (HPVENIVLVG…YTDEMYHMIK (209 aa)). The segment at 49 to 56 (GRTGNGKS) is G1. Residues 49–57 (GRTGNGKSA) and serine 70 each bind GTP. Positions 76 to 80 (GVTME) are G2. Residues 98–101 (DTPG) are G3. Positions 168–171 (TGGD) are G4. Residues 207–209 (DNK) form a G5 region. Residue asparagine 208 coordinates GTP. Positions 244–291 (YHMIKEENERHKKEQEELESKGHSEEQLAALMKELQIMNERNLKAMAE) form a coiled coil.

Belongs to the TRAFAC class TrmE-Era-EngA-EngB-Septin-like GTPase superfamily. AIG1/Toc34/Toc159-like paraseptin GTPase family. IAN subfamily. In terms of tissue distribution, mainly expressed in leaves.

This Arabidopsis thaliana (Mouse-ear cress) protein is Immune-associated nucleotide-binding protein 8.